Reading from the N-terminus, the 475-residue chain is 3-isopropylmalate dehydratase large subunit (475 aa).

3 residues coordinate [4Fe-4S] cluster: C353, C414, and C417.

This sequence belongs to the aconitase/IPM isomerase family. LeuC type 1 subfamily. Heterodimer of LeuC and LeuD. The cofactor is [4Fe-4S] cluster.

The catalysed reaction is (2R,3S)-3-isopropylmalate = (2S)-2-isopropylmalate. It functions in the pathway amino-acid biosynthesis; L-leucine biosynthesis; L-leucine from 3-methyl-2-oxobutanoate: step 2/4. Functionally, catalyzes the isomerization between 2-isopropylmalate and 3-isopropylmalate, via the formation of 2-isopropylmaleate. The polypeptide is 3-isopropylmalate dehydratase large subunit (Ectopseudomonas mendocina (strain ymp) (Pseudomonas mendocina)).